The chain runs to 1763 residues: Non-reducing polyketide synthase PKS19 (1763 aa).

An N-terminal acylcarrier protein transacylase domain (SAT) region spans residues 20 to 261; the sequence is GDQRNLFRKL…PMKKVQGMWH (242 aa). The region spanning 390–822 is the Ketosynthase family 3 (KS3) domain; the sequence is SSKIAVVGMA…GGNTSIIIEE (433 aa). Residues Cys-561, His-696, and His-740 each act as for beta-ketoacyl synthase activity in the active site. The malonyl-CoA:ACP transacylase (MAT) domain stretch occupies residues 922–1227; that stretch reads FAFTGQGTFY…QRDTDNWLTL (306 aa). Residues 1307–1439 form an N-terminal hotdog fold region; sequence HRLISEQYTD…VFYEDPSSWL (133 aa). The region spanning 1307–1609 is the PKS/mFAS DH domain; the sequence is HRLISEQYTD…FLQWPRVMLN (303 aa). The tract at residues 1334-1588 is product template (PT) domain; sequence GVVDGHAMNG…FVGDVYVLQG (255 aa). The active-site Proton acceptor; for dehydratase activity is His-1339. The segment at 1461–1609 is C-terminal hotdog fold; the sequence is VTGKASKLTT…FLQWPRVMLN (149 aa). The active-site Proton donor; for dehydratase activity is the Asp-1522. Residues 1619 to 1690 form a disordered region; it reads AKPAAKVPGK…MEELPSPPAG (72 aa). Over residues 1635 to 1647 the composition is skewed to basic residues; the sequence is PHFKPHHVSRHKP. One can recognise a Carrier domain in the interval 1689-1763; it reads AGMNDDMEKA…TIQDLKALLR (75 aa). Ser-1726 is modified (O-(pantetheine 4'-phosphoryl)serine).

In terms of biological role, non-reducing polyketide synthase that mediates the biosynthesis of alternariol (AOH), a micotoxin that seems not to be involved in virulence and oxidative stress tolerance. PKS19 alone is sufficient for AOH synthesis which is initiated by priming with acetyl-CoA, followed by sequential condensations of 6 malonyl-CoA units. The chain is Non-reducing polyketide synthase PKS19 from Phaeosphaeria nodorum (strain SN15 / ATCC MYA-4574 / FGSC 10173) (Glume blotch fungus).